The chain runs to 339 residues: Ribosomal RNA small subunit methyltransferase H (339 aa).

Residues 44-46 (GGY), D61, F88, D105, and Q112 each bind S-adenosyl-L-methionine. Positions 263–312 (PQAQSRHLPEKAAAQPVFEKPMKPVSPGEAETAENPRARSAHLRAARRTA) are disordered. The span at 301–312 (RSAHLRAARRTA) shows a compositional bias: basic residues.

This sequence belongs to the methyltransferase superfamily. RsmH family.

It localises to the cytoplasm. It catalyses the reaction cytidine(1402) in 16S rRNA + S-adenosyl-L-methionine = N(4)-methylcytidine(1402) in 16S rRNA + S-adenosyl-L-homocysteine + H(+). Its function is as follows. Specifically methylates the N4 position of cytidine in position 1402 (C1402) of 16S rRNA. The polypeptide is Ribosomal RNA small subunit methyltransferase H (Chelativorans sp. (strain BNC1)).